The sequence spans 321 residues: Putrescine export system permease protein SapB (321 aa).

The Cytoplasmic segment spans residues 1–8; that stretch reads MIIFTLRR. Residues 9–29 form a helical membrane-spanning segment; sequence ILLLIVTLFLLTFVGFSLSYF. The Periplasmic portion of the chain corresponds to 30 to 80; sequence TPHAPLQGASLWNAWVFWFNGLIHWDFGVSSINGQPIAEQLKEVFPATMEL. Positions 74 to 302 constitute an ABC transmembrane type-1 domain; that stretch reads FPATMELCIL…SLVIIVNVIS (229 aa). Residues 81 to 101 traverse the membrane as a helical segment; that stretch reads CILAFGFALIVGIPVGMIAGI. Residues 102 to 112 lie on the Cytoplasmic side of the membrane; the sequence is TRHKWQDNLIN. A helical membrane pass occupies residues 113–133; sequence AIALLGFSIPVFWLALLLTLF. Residues 134–174 are Periplasmic-facing; the sequence is CSLTLGWLPVSGRFDLLYEVKPITGFALIDAWLSDSPWRDE. The chain crosses the membrane as a helical span at residues 175-195; the sequence is MIMSAIRHMILPVITLSVAPT. Residues 196–248 are Cytoplasmic-facing; that stretch reads TEVIRLMRISTIEVYDQNYVKAAATRGLSRFTILRRHVLHNALPPVIPRLGLQ. A helical transmembrane segment spans residues 249 to 269; sequence FSTMLTLAMITEMVFSWPGLG. At 270–280 the chain is on the periplasmic side; it reads RWLINAIRQQD. The chain crosses the membrane as a helical span at residues 281-301; that stretch reads YAAISAGVMVCGSLVIIVNVI. Residues 302 to 321 lie on the Cytoplasmic side of the membrane; it reads SDILGAMANPLKHKEWYALR.

Belongs to the binding-protein-dependent transport system permease family. OppBC subfamily.

The protein resides in the cell inner membrane. In terms of biological role, part of a putrescine export transport system, does not play a role in resistance to antimicrobial peptides. This is Putrescine export system permease protein SapB (sapB) from Escherichia coli (strain K12).